The sequence spans 219 residues: tRNA (guanine-N(7)-)-methyltransferase (219 aa).

S-adenosyl-L-methionine-binding residues include D47, E72, N99, and D125. D125 is a catalytic residue. Substrate is bound by residues K129 and D161.

Belongs to the class I-like SAM-binding methyltransferase superfamily. TrmB family.

The enzyme catalyses guanosine(46) in tRNA + S-adenosyl-L-methionine = N(7)-methylguanosine(46) in tRNA + S-adenosyl-L-homocysteine. It functions in the pathway tRNA modification; N(7)-methylguanine-tRNA biosynthesis. In terms of biological role, catalyzes the formation of N(7)-methylguanine at position 46 (m7G46) in tRNA. This is tRNA (guanine-N(7)-)-methyltransferase from Nostoc sp. (strain PCC 7120 / SAG 25.82 / UTEX 2576).